The chain runs to 313 residues: Ester hydrolase C11orf54 homolog (313 aa).

Residues histidine 264, histidine 266, and histidine 276 each contribute to the Zn(2+) site.

In terms of assembly, monomer. Zn(2+) serves as cofactor.

Its subcellular location is the nucleus. The protein resides in the cytoplasm. Exhibits ester hydrolase activity on the substrate p-nitrophenyl acetate, in vitro. May regulate DNA damage and repair by regulating HIF1A degradation via chaperone-mediated autophagy (CMA). The chain is Ester hydrolase C11orf54 homolog from Xenopus tropicalis (Western clawed frog).